The chain runs to 632 residues: ATP-dependent RNA helicase mrh4, mitochondrial (632 aa).

Residues 1-37 (MNRLGRMSLPLRSPACLICQTRTTTLIPSSWQTARSM) constitute a mitochondrion transit peptide. Positions 49–111 (MALSPDVAKP…KEEAQKKESP (63 aa)) are disordered. Over residues 97 to 111 (RSGDSKEEAQKKESP) the composition is skewed to basic and acidic residues. A Q motif motif is present at residues 141-174 (TSFDQFPLLPVVRNSIVSQALPGLMEVTPTPIQR). A Helicase ATP-binding domain is found at 194 to 406 (DDDEPHYDQF…RKRYPDIKRL (213 aa)). ATP is bound at residue 207–214 (AETGSGKT). The short motif at 353–356 (DEAD) is the DEAD box element. Residues 460–632 (FLEPKTKKIL…EGMFRGQALI (173 aa)) enclose the Helicase C-terminal domain.

The protein belongs to the DEAD box helicase family. MRH4 subfamily.

The protein localises to the mitochondrion. The enzyme catalyses ATP + H2O = ADP + phosphate + H(+). Functionally, ATP-binding RNA helicase involved in mitochondrial RNA metabolism. Required for maintenance of mitochondrial DNA. In Aspergillus clavatus (strain ATCC 1007 / CBS 513.65 / DSM 816 / NCTC 3887 / NRRL 1 / QM 1276 / 107), this protein is ATP-dependent RNA helicase mrh4, mitochondrial (mrh4).